The chain runs to 584 residues: MKQELHHTLLGCGFRYTPAKQMPKGILLDTKSRRKGYYVKEYSTKGGVFVIALVLWNDPHIQLPFAYILQQPEQYKGRLLPHINFGFCLCYVTQMEADWNSNDLKSTYQDVDEQIQLTLDNSVASVESGTSNDVELEGEFSAYWQSEEELYLLAKPSRKAQLKAHLVEAELSSGSIRREYVAACSEQSEELVKWLNQRKFDESSLQEVSITTHCISVKPNRLAGVNWPPSCLREVLSWLKLVDYSAHARTVTLLMAKRTKRHILLFDVEGQDELAVYLELNLDVIGKRYFGRNAARKRNINNEAALLGGKFVSANFKRLGVTRADRDTLLSRNQSRPDVGNLSQKRIALIGCGTIGGYLAELLLRSGAGCGENYFHLYDNDSFKPHNFARHSLTAHNFGLAKSIALANSLKEAVHIAQSIKGIDRQFPIQADVLSKYDIVIDATGRPPVSKRLAAVARTLIADIRPVLIHAFNDGNGRASKVLVDDGRCCYGCMMADPAVYRNNIDLRFEGIDLAKEKHISCGSTYTPYDAAVSHITAALAQEAVLNTLEHTLPWNYSEHMLDGSRSKKPRTLKRFSGCNICDE.

Residues 1–137 form an E2-like domain region; that stretch reads MKQELHHTLL…SGTSNDVELE (137 aa). The active-site For E2-like domain is Cys90. Residues 138 to 338 are linker domain; it reads GEFSAYWQSE…LLSRNQSRPD (201 aa). Residues 339–584 form an adenylation plus E1-like domain region; it reads VGNLSQKRIA…RFSGCNICDE (246 aa). Cys522 functions as the For E1-like domain in the catalytic mechanism.

In the C-terminal section; belongs to the HesA/MoeB/ThiF family. In terms of assembly, interacts with CD-NTase DncV in the presence and absence of phage T2. A Cap2 dimer is bound on either side by a DncV monomer.

Its function is as follows. CD-NTase priming component of a CBASS antiviral system. CBASS (cyclic oligonucleotide-based antiphage signaling system) provides immunity against bacteriophages. The CD-NTase protein (DncV) synthesizes cyclic nucleotides in response to infection; these serve as specific second messenger signals. The signals activate a diverse range of effectors, leading to bacterial cell death and thus abortive phage infection. A type II-A(GA) CBASS system. Functionally, primes DncV; acts as a protein transferase, conjugating DncV, the CD-NTase, to unidentified target(s) in the cell via an E1-E2 ubiquitin transferase-like mechanism. During the conjugation reaction DncV is probably transiently attached to AMP. Protein conjugation requires ATP. In terms of biological role, protects E.coli against phage infection. When the CBASS operon (capV-dncV-cap2-cap3) is introduced in E.coli MG1655 there is about 100-fold protection against phages P1 and T2. When the operon is introduced in E.coli MG1655 there is a more than 10(3) decrease in the efficiency of T2 plaque formation. Protects 100-fold against phage T5, offers no protection against T7. When the operon is introduced in E.coli MG1655 it protects against phages T2, T4, T5 and T6. Another paper shows the operon confers protection against phages P1, T2, T5 and T6 but not T4 or lambda. The chain is ATP-dependent ubiquitin transferase-like protein Cap2 from Vibrio cholerae serotype O1 (strain ATCC 39315 / El Tor Inaba N16961).